The following is a 306-amino-acid chain: Serine/threonine-protein phosphatase PP2A-1 catalytic subunit (306 aa).

4 residues coordinate Mn(2+): Asp-54, His-56, Asp-82, and Asn-114. Catalysis depends on His-115, which acts as the Proton donor. His-164 and His-238 together coordinate Mn(2+).

It belongs to the PPP phosphatase family. PP-2A subfamily. The cofactor is Mn(2+).

It is found in the cytoplasm. The enzyme catalyses O-phospho-L-seryl-[protein] + H2O = L-seryl-[protein] + phosphate. The catalysed reaction is O-phospho-L-threonyl-[protein] + H2O = L-threonyl-[protein] + phosphate. The protein is Serine/threonine-protein phosphatase PP2A-1 catalytic subunit (PP2A1) of Oryza sativa subsp. indica (Rice).